Consider the following 212-residue polypeptide: MKKVKIALTKGRLEEKAIEIFKDIGVNVDELLNKGRKLIFHSENKEYNIEFFLVKAPDVTTYVDYGAADIGIVGKDTLMEKEKDFYEVMDLKIGKCKFAVATLPEIDIYKGYNIKKIATKYPKVARKYFRNKGIDVELIKIEGSVELAPIVGLADAIVDIVETGSTLKENGLVVVEDICNISARMIVNKTSMKTKQNEISKIIENVNRVVNN.

It belongs to the ATP phosphoribosyltransferase family. Short subfamily. In terms of assembly, heteromultimer composed of HisG and HisZ subunits.

The protein resides in the cytoplasm. The enzyme catalyses 1-(5-phospho-beta-D-ribosyl)-ATP + diphosphate = 5-phospho-alpha-D-ribose 1-diphosphate + ATP. It participates in amino-acid biosynthesis; L-histidine biosynthesis; L-histidine from 5-phospho-alpha-D-ribose 1-diphosphate: step 1/9. Functionally, catalyzes the condensation of ATP and 5-phosphoribose 1-diphosphate to form N'-(5'-phosphoribosyl)-ATP (PR-ATP). Has a crucial role in the pathway because the rate of histidine biosynthesis seems to be controlled primarily by regulation of HisG enzymatic activity. This chain is ATP phosphoribosyltransferase, found in Clostridium novyi (strain NT).